The chain runs to 364 residues: Photoreceptor outer segment membrane glycoprotein 2 (364 aa).

At 1 to 24 (MTVLKVKFTKTKRDKLAQILWILN) the chain is on the cytoplasmic side. A helical transmembrane segment spans residues 25–43 (WVSVVSGIILFSLGLFLKI). Residues 44-61 (EIKKRNEVMAKGDINSVP) lie on the Lumenal side of the membrane. Residues 62–80 (NMLISVGVIACVVNFLGGK) traverse the membrane as a helical segment. Over 81–99 (ICYDCSDANKFSRWKLIML) the chain is Cytoplasmic. The chain crosses the membrane as a helical span at residues 100–123 (PYIICTFCFTFCILLGALMCYTMR). Over 124 to 264 (NELEESLYLG…LEYYTAIMRS (141 aa)) the chain is Lumenal. An N-linked (GlcNAc...) asparagine glycan is attached at Asn229. A helical transmembrane segment spans residues 265–290 (IGIAALLIWLFELSVLIGVRYLQTAM). Topologically, residues 291–364 (KNVLLQGDLQ…VTAKSIPAAS (74 aa)) are cytoplasmic.

Belongs to the PRPH2/ROM1 family.

It localises to the membrane. The sequence is that of Photoreceptor outer segment membrane glycoprotein 2 from Gallus gallus (Chicken).